Here is a 1241-residue protein sequence, read N- to C-terminus: ATP-dependent helicase/nuclease subunit A (1241 aa).

One can recognise a UvrD-like helicase ATP-binding domain in the interval 12–485 (SQWTDDQWKA…IDLAKNFRSR (474 aa)). Residue 33–40 (AAAGSGKT) participates in ATP binding. Residues 505-805 (GEIDYDADAE…RIMTIHKSKG (301 aa)) form the UvrD-like helicase C-terminal domain.

The protein belongs to the helicase family. AddA subfamily. As to quaternary structure, heterodimer of AddA and AddB/RexB. Mg(2+) serves as cofactor.

It catalyses the reaction Couples ATP hydrolysis with the unwinding of duplex DNA by translocating in the 3'-5' direction.. The catalysed reaction is ATP + H2O = ADP + phosphate + H(+). In terms of biological role, the heterodimer acts as both an ATP-dependent DNA helicase and an ATP-dependent, dual-direction single-stranded exonuclease. Recognizes the chi site generating a DNA molecule suitable for the initiation of homologous recombination. The AddA nuclease domain is required for chi fragment generation; this subunit has the helicase and 3' -&gt; 5' nuclease activities. In Bacillus anthracis, this protein is ATP-dependent helicase/nuclease subunit A.